A 145-amino-acid chain; its full sequence is 3-hydroxyacyl-[acyl-carrier-protein] dehydratase FabZ (145 aa).

Histidine 51 is an active-site residue.

This sequence belongs to the thioester dehydratase family. FabZ subfamily.

The protein resides in the cytoplasm. It catalyses the reaction a (3R)-hydroxyacyl-[ACP] = a (2E)-enoyl-[ACP] + H2O. Functionally, involved in unsaturated fatty acids biosynthesis. Catalyzes the dehydration of short chain beta-hydroxyacyl-ACPs and long chain saturated and unsaturated beta-hydroxyacyl-ACPs. The chain is 3-hydroxyacyl-[acyl-carrier-protein] dehydratase FabZ from Staphylococcus haemolyticus (strain JCSC1435).